A 319-amino-acid polypeptide reads, in one-letter code: Translocon-associated protein subunit alpha (319 aa).

A signal peptide spans 1–21; sequence MRLLPRLLLLFLLAFPAAVLL. Residues 22–208 lie on the Lumenal side of the membrane; it reads RGGPGGSLAV…EREDGLDGET (187 aa). Acidic residues predominate over residues 35–76; it reads LTEDEETVEDPIIEDEDDEAEVEEDEPTDLAEEKEEEEDVSS. The segment at 35 to 84 is disordered; the sequence is LTEDEETVEDPIIEDEDDEAEVEEDEPTDLAEEKEEEEDVSSEPEASPSA. N-linked (GlcNAc...) asparagine glycans are attached at residues asparagine 137 and asparagine 192. The chain crosses the membrane as a helical span at residues 209-229; that stretch reads IFMYMFLAGLGLLVVVGLHQL. The Cytoplasmic segment spans residues 230–319; it reads LESRKRKRPI…SLRQLAVCGI (90 aa). Phosphoserine is present on serine 248. Residue threonine 261 is modified to Phosphothreonine.

Belongs to the TRAP-alpha family. In terms of assembly, heterotetramer of TRAP-alpha, TRAP-beta, TRAP-delta and TRAP-gamma. Interacts with palmitoylated calnexin (CALX), the interaction is required for efficient folding of glycosylated proteins.

It localises to the endoplasmic reticulum membrane. Functionally, TRAP proteins are part of a complex whose function is to bind calcium to the ER membrane and thereby regulate the retention of ER resident proteins. May be involved in the recycling of the translocation apparatus after completion of the translocation process or may function as a membrane-bound chaperone facilitating folding of translocated proteins. The sequence is that of Translocon-associated protein subunit alpha (Ssr1) from Rattus norvegicus (Rat).